A 251-amino-acid polypeptide reads, in one-letter code: Xylose/arabinose import ATP-binding protein XylG (251 aa).

Residues 5 to 241 (LEIRDVHKSF…EITEVMTSFA (237 aa)) form the ABC transporter domain. Residue 37 to 44 (GDNGAGKS) participates in ATP binding.

It belongs to the ABC transporter superfamily. In terms of assembly, the complex is composed of two ATP-binding proteins (XylG), two transmembrane proteins (XylH) and a solute-binding protein (XylF).

The protein localises to the cell membrane. The enzyme catalyses D-xylose(out) + ATP + H2O = D-xylose(in) + ADP + phosphate + H(+). It catalyses the reaction L-arabinose(out) + ATP + H2O = L-arabinose(in) + ADP + phosphate + H(+). In terms of biological role, part of the ABC transporter complex XylFGH involved in the uptake of xylose and arabinose. Responsible for energy coupling to the transport system. In Sulfolobus acidocaldarius (strain ATCC 33909 / DSM 639 / JCM 8929 / NBRC 15157 / NCIMB 11770), this protein is Xylose/arabinose import ATP-binding protein XylG.